Reading from the N-terminus, the 429-residue chain is Glutamate-1-semialdehyde 2,1-aminomutase 1 (429 aa).

Residue Lys268 is modified to N6-(pyridoxal phosphate)lysine.

It belongs to the class-III pyridoxal-phosphate-dependent aminotransferase family. HemL subfamily. As to quaternary structure, homodimer. Requires pyridoxal 5'-phosphate as cofactor.

The protein localises to the cytoplasm. It carries out the reaction (S)-4-amino-5-oxopentanoate = 5-aminolevulinate. It participates in porphyrin-containing compound metabolism; protoporphyrin-IX biosynthesis; 5-aminolevulinate from L-glutamyl-tRNA(Glu): step 2/2. This Listeria welshimeri serovar 6b (strain ATCC 35897 / DSM 20650 / CCUG 15529 / CIP 8149 / NCTC 11857 / SLCC 5334 / V8) protein is Glutamate-1-semialdehyde 2,1-aminomutase 1.